The sequence spans 335 residues: 2-acylglycerol O-acyltransferase 2-A (335 aa).

Helical transmembrane passes span 24–44 and 47–67; these read WVFS…VLLF and FWII…TPSK.

It belongs to the diacylglycerol acyltransferase family.

The protein resides in the endoplasmic reticulum membrane. It localises to the cytoplasm. It is found in the perinuclear region. The catalysed reaction is a 2-acylglycerol + an acyl-CoA = a 1,2-diacylglycerol + CoA. The enzyme catalyses a 2-acylglycerol + an acyl-CoA = a 1,2-diacyl-sn-glycerol + CoA. It carries out the reaction a 2-acylglycerol + an acyl-CoA = a 2,3-diacyl-sn-glycerol + CoA. It catalyses the reaction a 1-acylglycerol + an acyl-CoA = a 1,2-diacylglycerol + CoA. The catalysed reaction is a 1-acylglycerol + an acyl-CoA = a 1,3-diacylglycerol + CoA. The enzyme catalyses 1-O-alkylglycerol + an acyl-CoA = 1-O-alkyl-3-acylglycerol + CoA. It carries out the reaction an acyl-CoA + a 1,2-diacyl-sn-glycerol = a triacyl-sn-glycerol + CoA. The protein operates within glycerolipid metabolism; triacylglycerol biosynthesis. In terms of biological role, catalyzes the formation of diacylglycerol from 2-monoacylglycerol and fatty acyl-CoA. Involved in glycerolipid synthesis and lipid metabolism. Catalyzes the formation of diacylglycerol, the precursor of triacylglycerol, by transferring the acyl chain of a fatty acyl-CoA to a monoacylglycerol. Plays a central role in absorption of dietary fat in the small intestine by catalyzing the resynthesis of triacylglycerol in enterocytes. Has a preference toward monoacylglycerols containing unsaturated fatty acids in an order of C18:3 &gt; C18:2 &gt; C18:1 &gt; C18:0 at sn-2. Able to use 1-monoalkylglycerol (1-MAkG, 1-O-alkylglycerol) as an acyl acceptor for the synthesis of monoalkyl-monoacylglycerol (MAMAG, 1-O-alkyl-3-acylglycerol or 1-O-alkyl-2-acylglycerol) and subsequently, with lower efficiency, may add another acyl chain producing monoalkyl-diacylglycerol (MADAG, 1-O-alkyl-2,3-diacylglycerol). Possesses weak but significant activity with diacylglycerol as substrate, producing triacylglycerol (triacyl-sn-glycerol). This Xenopus laevis (African clawed frog) protein is 2-acylglycerol O-acyltransferase 2-A (mogat2-a).